The following is a 269-amino-acid chain: Expansin-B9 (269 aa).

The signal sequence occupies residues 1–24; that stretch reads MGSLTTNIVLAVAVVAALVGGGSC. Residue asparagine 34 is glycosylated (N-linked (GlcNAc...) asparagine). The 107-residue stretch at 63–169 folds into the Expansin-like EG45 domain; the sequence is GGACGIKNVN…RRVRCKYPGG (107 aa). 3 cysteine pairs are disulfide-bonded: cysteine 66–cysteine 94, cysteine 97–cysteine 164, and cysteine 102–cysteine 108. An Expansin-like CBD domain is found at 183 to 264; that stretch reads NYLAVLVKFV…NWMPDAIYVS (82 aa).

The protein belongs to the expansin family. Expansin B subfamily.

The protein resides in the secreted. Its subcellular location is the cell wall. It is found in the membrane. Its function is as follows. May cause loosening and extension of plant cell walls by disrupting non-covalent bonding between cellulose microfibrils and matrix glucans. No enzymatic activity has been found. May be required for rapid internodal elongation in deepwater rice during submergence. This chain is Expansin-B9 (EXPB9), found in Oryza sativa subsp. japonica (Rice).